A 545-amino-acid polypeptide reads, in one-letter code: DnaJ homolog subfamily C member 21 (545 aa).

The J domain maps to 3 to 69 (CHYEVLGVKR…QERAWYDNHR (67 aa)). 4 disordered regions span residues 122 to 141 (EKEH…SFGE), 276 to 302 (EYGQ…IANV), 331 to 497 (SFKS…KEVN), and 522 to 545 (HATA…RKNR). Acidic residues-rich tracts occupy residues 129-141 (EEDE…SFGE) and 283-295 (DASD…EELE). Residues 180–286 (RWEKRAMEKE…YGQEFGDASD (107 aa)) are a coiled coil. The C2H2-type 1 zinc-finger motif lies at 323 to 347 (LYCPACDKSFKSDKAMKNHSKSKKH). The segment covering 339–348 (KNHSKSKKHR) has biased composition (basic residues). A compositionally biased stretch (acidic residues) spans 372–388 (REEDDEEEDDDDDDEQN). Over residues 394–406 (KLSKRQKKKKRLQ) the composition is skewed to basic residues. Residues 498–522 (LRCVTCQYEFTTRNKLFDHLKSTGH) form a C2H2-type 2 zinc finger. Residues 535–545 (SKKKKDSRKNR) are compositionally biased toward basic residues.

Its function is as follows. May act as a co-chaperone for HSP70. This is DnaJ homolog subfamily C member 21 (dnajc21) from Danio rerio (Zebrafish).